A 71-amino-acid chain; its full sequence is Ranatuerin-2Va (71 aa).

The N-terminal stretch at 1-22 (MFTLKKSFLLLFFLGTITLSLC) is a signal peptide. A propeptide spanning residues 23–43 (EQERGADEDDGVEMTEEEVKR) is cleaved from the precursor. An intrachain disulfide couples Cys-66 to Cys-71.

As to expression, expressed by the skin glands.

The protein localises to the secreted. Functionally, antimicrobial peptide. The protein is Ranatuerin-2Va of Odorrana versabilis (Chinese bamboo leaf odorous frog).